The primary structure comprises 130 residues: Small ribosomal subunit protein bS6 (130 aa).

Residues 100–130 (SPMVKAKDERRERHDFASEANDDSEAGDSEE) are disordered. Residues 104 to 116 (KAKDERRERHDFA) are compositionally biased toward basic and acidic residues. A compositionally biased stretch (acidic residues) spans 119–130 (ANDDSEAGDSEE).

This sequence belongs to the bacterial ribosomal protein bS6 family.

Binds together with bS18 to 16S ribosomal RNA. The chain is Small ribosomal subunit protein bS6 from Yersinia pestis (strain Pestoides F).